We begin with the raw amino-acid sequence, 464 residues long: tRNA modification GTPase MnmE (464 aa).

Residues arginine 29, glutamate 91, and arginine 131 each coordinate (6S)-5-formyl-5,6,7,8-tetrahydrofolate. In terms of domain architecture, TrmE-type G spans 226 to 387; it reads GLKVALTGKP…LINYLLKKCG (162 aa). Asparagine 236 provides a ligand contact to K(+). GTP is bound by residues 236–241, 255–261, and 280–283; these read NVGKSS, TDLPGTT, and DTAG. Serine 240 is a Mg(2+) binding site. Residues threonine 255, leucine 257, and threonine 260 each contribute to the K(+) site. Threonine 261 contacts Mg(2+). Lysine 464 contributes to the (6S)-5-formyl-5,6,7,8-tetrahydrofolate binding site.

The protein belongs to the TRAFAC class TrmE-Era-EngA-EngB-Septin-like GTPase superfamily. TrmE GTPase family. In terms of assembly, homodimer. Heterotetramer of two MnmE and two MnmG subunits. It depends on K(+) as a cofactor.

It localises to the cytoplasm. In terms of biological role, exhibits a very high intrinsic GTPase hydrolysis rate. Involved in the addition of a carboxymethylaminomethyl (cmnm) group at the wobble position (U34) of certain tRNAs, forming tRNA-cmnm(5)s(2)U34. This is tRNA modification GTPase MnmE from Prochlorococcus marinus (strain NATL2A).